A 417-amino-acid polypeptide reads, in one-letter code: Divinyl chlorophyllide a 8-vinyl-reductase, chloroplastic (417 aa).

The N-terminal 49 residues, 1–49, are a transit peptide targeting the chloroplast; that stretch reads MSLCSSFNVFASYSPKPKTIFKDSKFISQFQVKSSPLASTFHTNESSTS.

As to expression, highly expressed in leaves, stems and flower buds. Detected in roots.

The protein localises to the plastid. The protein resides in the chloroplast. The catalysed reaction is protochlorophyllide a + NADP(+) = 3,8-divinyl protochlorophyllide a + NADPH + H(+). Its pathway is porphyrin-containing compound metabolism; chlorophyll biosynthesis. Its function is as follows. Catalyzes the conversion of divinyl chlorophyllide to monovinyl chlorophyllide. Reduces the 8-vinyl group of the tetrapyrrole to an ethyl group using NADPH as the reductant. The best substrate is (3,8-divinyl)-chlorophyllide a (DV-Chlidea). Very low activity with (3,8-divinyl)-protochlorophyllide a (DV-Pchlidea) and (3,8-divinyl)-magnesium-protoporphyrin IX monomethyl ester (DV-MPE). No activity with (3,8-divinyl)-chlorophyllide b (DV-Chlideb), (3,8-divinyl)-magnesium-protoporphyrin IX (DV-Mg-Proto) and either (3,8-divinyl)-chlorophyll a (DV-Chla) or b (DV-Chlb). The chain is Divinyl chlorophyllide a 8-vinyl-reductase, chloroplastic (DVR) from Arabidopsis thaliana (Mouse-ear cress).